We begin with the raw amino-acid sequence, 618 residues long: DELLA protein SLN1 (618 aa).

Residues 1 to 36 (MKREYQDGGGSGGGGDEMGSSRDKMMVSSSEAGEGE) are disordered. The span at 7–17 (DGGGSGGGGDE) shows a compositional bias: gly residues. A DELLA motif motif is present at residues 39–43 (DELLA). 2 disordered regions span residues 106–137 (LNAPPPPLPPAPPQLNASTSSTVTGGGGYFDL) and 159–197 (APADLSADSVRDPKRMRTGGSSTSSSSSSSSSLGGGAAR). The span at 108-118 (APPPPLPPAPP) shows a compositional bias: pro residues. Low complexity-rich tracts occupy residues 119-128 (QLNASTSSTV) and 176-197 (TGGSSTSSSSSSSSSLGGGAAR). One can recognise a GRAS domain in the interval 221 to 614 (VDTQEAGIRL…RPLIATSAWR (394 aa)). The segment at 228–284 (IRLVHALLACAEAVQQENLSAAEALVKQIPLLAASQGGAMRKVAAYFGEALARRVFR) is leucine repeat I (LRI). Residues 235-239 (LACAE) carry the LxCxE motif motif. A VHIID region spans residues 303–368 (HAHFYESCPY…GGPPSFRLTG (66 aa)). The short motif at 334 to 338 (VHVVD) is the VHIID element. A leucine repeat II (LRII) region spans residues 382-421 (QVGWKLAQFAHTIRVDFQYRGLVAATLADLEPFMLQPEGE). The segment at 431–535 (IAVNSVFEMH…EVYLGRQICN (105 aa)) is PFYRE. Residues 538–614 (ACEGTERTER…RPLIATSAWR (77 aa)) form an SAW region.

The protein belongs to the GRAS family. DELLA subfamily. Phosphorylated. Post-translationally, ubiquitinated. Upon GA application it is ubiquitinated, leading to its subsequent degradation. In terms of tissue distribution, apparently restricted to regions where growth is occurring in the leaf blade. Localizes almost exclusively to the basal elongation zone (EZ) for the elongating blades of L1, L2 and L3. More detailed fractionation of the L3 blade shows that in cv. Himalaya, it is preferentially localized to the basal third of the EZ, but its presence can still be detected toward the end of the EZ (at protein level).

It is found in the nucleus. Probable transcriptional regulator that acts as a repressor of the gibberellin (GA) signaling pathway. Probably acts by participating in large multiprotein complexes that repress transcription of GA-inducible genes. Upon GA application, it is degraded by the proteasome, allowing the GA signaling pathway. Acts as a negative regulator of GAMYB gene expression. This chain is DELLA protein SLN1 (SLN1), found in Hordeum vulgare (Barley).